A 318-amino-acid polypeptide reads, in one-letter code: D-alanine--D-alanine ligase (318 aa).

The region spanning 116–315 (KQVWQSLGLP…FEQLSLAVLA (200 aa)) is the ATP-grasp domain. 146–201 (MSRLGDLVMVKPAQEGSSIGMAKVSNAQQLAAAIQQAFEYDDKVLLEQFIQGSEYT) lines the ATP pocket. The Mg(2+) site is built by Asp269, Glu282, and Asn284.

It belongs to the D-alanine--D-alanine ligase family. The cofactor is Mg(2+). Mn(2+) is required as a cofactor.

It localises to the cytoplasm. It carries out the reaction 2 D-alanine + ATP = D-alanyl-D-alanine + ADP + phosphate + H(+). It functions in the pathway cell wall biogenesis; peptidoglycan biosynthesis. Functionally, cell wall formation. This is D-alanine--D-alanine ligase from Pseudoalteromonas atlantica (strain T6c / ATCC BAA-1087).